A 264-amino-acid polypeptide reads, in one-letter code: Probable glycerophosphodiester phosphodiesterase 2 (264 aa).

One can recognise a GP-PDE domain in the interval 17–255; it reads RIAMAHRGFT…DRADLLRDVL (239 aa). His22 acts as the Proton acceptor in catalysis. Residues Glu50, Asp52, and His65 each contribute to the a divalent metal cation site. His65 acts as the Proton donor in catalysis.

It belongs to the glycerophosphoryl diester phosphodiesterase family. It depends on a divalent metal cation as a cofactor.

It catalyses the reaction a sn-glycero-3-phosphodiester + H2O = an alcohol + sn-glycerol 3-phosphate + H(+). Its function is as follows. Glycerophosphodiester phosphodiesterase hydrolyzes glycerophosphodiesters into glycerol-3-phosphate (G3P) and the corresponding alcohol. The sequence is that of Probable glycerophosphodiester phosphodiesterase 2 from Mycobacterium tuberculosis (strain ATCC 25618 / H37Rv).